A 302-amino-acid chain; its full sequence is Putative gluconeogenesis factor (302 aa).

This sequence belongs to the gluconeogenesis factor family.

The protein localises to the cytoplasm. Functionally, required for morphogenesis under gluconeogenic growth conditions. The chain is Putative gluconeogenesis factor (ybhK) from Salmonella typhimurium (strain LT2 / SGSC1412 / ATCC 700720).